We begin with the raw amino-acid sequence, 102 residues long: Large ribosomal subunit protein uL24 (102 aa).

It belongs to the universal ribosomal protein uL24 family. Part of the 50S ribosomal subunit.

Functionally, one of two assembly initiator proteins, it binds directly to the 5'-end of the 23S rRNA, where it nucleates assembly of the 50S subunit. In terms of biological role, one of the proteins that surrounds the polypeptide exit tunnel on the outside of the subunit. The polypeptide is Large ribosomal subunit protein uL24 (Cupriavidus pinatubonensis (strain JMP 134 / LMG 1197) (Cupriavidus necator (strain JMP 134))).